Consider the following 402-residue polypeptide: Caspase-1 (402 aa).

The CARD domain occupies 1–91; that stretch reads MADKILRAKR…YLAGILELQS (91 aa). Residues 1-118 constitute a propeptide that is removed on maturation; sequence MADKILRAKR…PSSSETKEEQ (118 aa). Positions 98 to 125 are disordered; the sequence is FVATEDSKGGHPSSSETKEEQNKEDGTF. Residues 113-123 are compositionally biased toward basic and acidic residues; the sequence is ETKEEQNKEDG. Active-site residues include His236 and Cys284. Positions 297–314 are excised as a propeptide; that stretch reads SVRDSEEDFLTDAIFEDD. At Ser301 the chain carries Phosphoserine. Arg343 bears the Omega-N-methylarginine mark.

This sequence belongs to the peptidase C14A family. In terms of assembly, heterotetramer that consists of two anti-parallel arranged heterodimers, each one formed by a 20 kDa (Caspase-1 subunit p20) and a 10 kDa (Caspase-1 subunit p10) subunit. May be a component of the inflammasome, a protein complex which also includes PYCARD, CARD8 and NLRP2 and whose function would be the activation of pro-inflammatory caspases. Component of the AIM2 PANoptosome complex, a multiprotein complex that drives inflammatory cell death (PANoptosis). Both the p10 and p20 subunits interact with MEFV. Interacts with CARD17P/INCA and CARD18. Interacts with SERPINB1; this interaction regulates CASP1 activity. Heterotetramer that consists of two anti-parallel arranged heterodimers, each one formed by a 20 kDa (Caspase-1 subunit p20) and a 10 kDa (Caspase-1 subunit p10) subunit. Post-translationally, the two subunits are derived from the precursor sequence by an autocatalytic mechanism. Ubiquitinated via 'Lys-11'-linked polyubiquitination. Deubiquitinated by USP8. In terms of tissue distribution, high level expression seen in spleen and lung, low level expression seen in brain, heart, liver, kidney, testis and skeletal muscle.

The protein resides in the cytoplasm. Its subcellular location is the cell membrane. The catalysed reaction is Strict requirement for an Asp residue at position P1 and has a preferred cleavage sequence of Tyr-Val-Ala-Asp-|-.. Thiol protease involved in a variety of inflammatory processes by proteolytically cleaving other proteins, such as the precursors of the inflammatory cytokines interleukin-1 beta (IL1B) and interleukin 18 (IL18) as well as the pyroptosis inducer Gasdermin-D (GSDMD), into active mature peptides. Plays a key role in cell immunity as an inflammatory response initiator: once activated through formation of an inflammasome complex, it initiates a pro-inflammatory response through the cleavage of the two inflammatory cytokines IL1B and IL18, releasing the mature cytokines which are involved in a variety of inflammatory processes. Cleaves a tetrapeptide after an Asp residue at position P1. Also initiates pyroptosis, a programmed lytic cell death pathway, through cleavage of GSDMD. In contrast to cleavage of interleukin IL1B, recognition and cleavage of GSDMD is not strictly dependent on the consensus cleavage site but depends on an exosite interface on CASP1 that recognizes and binds the Gasdermin-D, C-terminal (GSDMD-CT) part. Cleaves and activates CASP7 in response to bacterial infection, promoting plasma membrane repair. Upon inflammasome activation, during DNA virus infection but not RNA virus challenge, controls antiviral immunity through the cleavage of CGAS, rendering it inactive. In apoptotic cells, cleaves SPHK2 which is released from cells and remains enzymatically active extracellularly. This is Caspase-1 (Casp1) from Mus musculus (Mouse).